Here is a 544-residue protein sequence, read N- to C-terminus: MGNSCRGSFKDKIYEGNHSRPEENSKSTTTTVSSVHSPTTDQDFSKQNTNPALVIPVKEPIMRRNVDNQSYYVLGHKTPNIRDLYTLSRKLGQGQFGTTYLCTDIATGVDYACKSISKRKLISKEDVEDVRREIQIMHHLAGHKNIVTIKGAYEDPLYVHIVMELCAGGELFDRIIHRGHYSERKAAELTKIIVGVVEACHSLGVMHRDLKPENFLLVNKDDDFSLKAIDFGLSVFFKPGQIFKDVVGSPYYVAPEVLLKHYGPEADVWTAGVILYILLSGVPPFWAETQQGIFDAVLKGYIDFDTDPWPVISDSAKDLIRKMLCSSPSERLTAHEVLRHPWICENGVAPDRALDPAVLSRLKQFSAMNKLKKMALKVIAESLSEEEIAGLRAMFEAMDTDNSGAITFDELKAGLRRYGSTLKDTEIRDLMEAADVDNSGTIDYSEFIAATIHLNKLEREEHLVSAFQYFDKDGSGYITIDELQQSCIEHGMTDVFLEDIIKEVDQDNDGRIDYEEFVAMMQKGNAGVGRRTMKNSLNISMRDV.

Residues 1–47 (MGNSCRGSFKDKIYEGNHSRPEENSKSTTTTVSSVHSPTTDQDFSKQ) are disordered. Gly2 carries the N-myristoyl glycine lipid modification. A compositionally biased stretch (basic and acidic residues) spans 8-25 (SFKDKIYEGNHSRPEENS). Over residues 26–40 (KSTTTTVSSVHSPTT) the composition is skewed to low complexity. The region spanning 85–343 (YTLSRKLGQG…AHEVLRHPWI (259 aa)) is the Protein kinase domain. Residues 91–99 (LGQGQFGTT) and Lys114 contribute to the ATP site. The active-site Proton acceptor is Asp209. Ser249 bears the Phosphoserine mark. Positions 349–379 (APDRALDPAVLSRLKQFSAMNKLKKMALKVI) are autoinhibitory domain. EF-hand domains follow at residues 386-421 (EEIAGLRAMFEAMDTDNSGAITFDELKAGLRRYGST), 422-457 (LKDTEIRDLMEAADVDNSGTIDYSEFIAATIHLNKL), 458-493 (EREEHLVSAFQYFDKDGSGYITIDELQQSCIEHGMT), and 497-527 (LEDIIKEVDQDNDGRIDYEEFVAMMQKGNAG). 19 residues coordinate Ca(2+): Asp399, Asp401, Ser403, Glu410, Asp435, Asp437, Ser439, Thr441, Glu446, Asp471, Asp473, Ser475, Tyr477, Glu482, Asp505, Asp507, Asp509, Arg511, and Glu516.

The protein belongs to the protein kinase superfamily. Ser/Thr protein kinase family. CDPK subfamily. In terms of assembly, interacts with SLAC1. Interacts with FD. In terms of tissue distribution, expressed in both guard cells and mesophyll cells. Expressed in the shoot apical meristem.

It localises to the cell membrane. The protein resides in the nucleus. It carries out the reaction L-seryl-[protein] + ATP = O-phospho-L-seryl-[protein] + ADP + H(+). The enzyme catalyses L-threonyl-[protein] + ATP = O-phospho-L-threonyl-[protein] + ADP + H(+). Activated by calcium. Autophosphorylation may play an important role in the regulation of the kinase activity. Its function is as follows. May play a role in signal transduction pathways that involve calcium as a second messenger. Functions in abscisic acid (ABA) regulation of guard cell S-type anion- and Ca(2+)-permeable channels and stomatal closure. Phosphorylates FD. The polypeptide is Calcium-dependent protein kinase 6 (CPK6) (Arabidopsis thaliana (Mouse-ear cress)).